Consider the following 395-residue polypeptide: uncharacterized protein (395 aa).

The N-terminal stretch at 1 to 18 is a signal peptide; the sequence is MKHVIMLYFIAAATLFSS. The N-palmitoyl cysteine moiety is linked to residue Cys-19. A lipid anchor (S-diacylglycerol cysteine) is attached at Cys-19.

The protein localises to the cell outer membrane. Functionally, may be involved in ulvan degradation. Ulvan is the main polysaccharide component of the Ulvales (green seaweed) cell wall. It is composed of disaccharide building blocks comprising 3-sulfated rhamnose (Rha3S) linked to D-glucuronic acid (GlcA), L-iduronic acid (IduA), or D-xylose (Xyl). This is an uncharacterized protein from Formosa agariphila (strain DSM 15362 / KCTC 12365 / LMG 23005 / KMM 3901 / M-2Alg 35-1).